The sequence spans 853 residues: Stachyose synthase (853 aa).

A propeptide spanning residues 1 to 11 (MAPPLNSTTSN) is cleaved from the precursor.

Belongs to the glycosyl hydrolases 36 family.

The protein resides in the cytoplasm. It carries out the reaction alpha-D-galactosyl-(1-&gt;3)-1D-myo-inositol + raffinose = stachyose + myo-inositol. It functions in the pathway glycan metabolism; stachyose biosynthesis; stachyose from raffinose: step 1/1. In terms of biological role, catalyzes stachyose synthesis by transfer of a galactosyl moiety from galactinol to raffinose. Also catalyzes verbascose synthesis by galactosyl transfer from galactinol to stachyose or from one stachyose molecule to another. Oligosaccharides of the raffinose family play a protective role in maturation drying of seeds. They may act as cryoprotectants in frost-hardy plants. This is Stachyose synthase (STS1) from Pisum sativum (Garden pea).